A 239-amino-acid polypeptide reads, in one-letter code: Immunoglobulin superfamily member 23 (239 aa).

Positions 63–93 are disordered; sequence ELEAQPPTSSSPKGLPGRPRTSQEVPNAEDN. The Ig-like domain maps to 94–179; sequence PSLIPLVTFP…ELVSEPVTVS (86 aa). Residues 214–234 form a helical membrane-spanning segment; sequence LIVAATIGGLVLIGSVCFYIL.

It is found in the cell membrane. May be involved in osteoclast differentiation. This is Immunoglobulin superfamily member 23 from Mus musculus (Mouse).